The chain runs to 279 residues: MAFQGTSRTLTQQSSAATSDDLQKILFSPEAIKKMATECDLGRHHWMRADNAISVRPLVPEVTHGRIASFFKSGYDVGELCSKGYMSVPQVLCAVTRTVSTDAEGSLRIYLADLGDKELSPIDGQCVSLHNHDLPALVSFQPTYDCPMETVGNRKRCFAVVIERHGYIGYTGTTASVCSNWQARFSSKNNNYTHIAAGKTLVLPFNRLAEQTKPSAVARLLKSQLNNIESSQYLLTNAKINQNARSESEELNVESPPAAIGSSSASRSEAFRPQVVNGL.

Residues 246-279 form a disordered region; that stretch reads SESEELNVESPPAAIGSSSASRSEAFRPQVVNGL. Over residues 254-268 the composition is skewed to low complexity; the sequence is ESPPAAIGSSSASRS.

It belongs to the cucumovirus movement protein family.

It is found in the host cell junction. The protein localises to the host plasmodesma. Transports viral genome to neighboring plant cells directly through plasmosdesmata, without any budding. The movement protein allows efficient cell to cell propagation, by bypassing the host cell wall barrier. Acts by forming a tubular structure at the host plasmodesmata, enlarging it enough to allow free passage of virion capsids. The chain is Movement protein from Cucumis sativus (Cucumber).